The primary structure comprises 567 residues: MASHVDLLTELQLLEKVPTLERLRAAQKRRAQQLKKWAQYEQDLQHRKRKHERKRSTGGRRKKVSFEASVALLEASLRNDAEEVRYFLKNKVSPDLCNEDGLTALHQCCIDNFEEIVKLLLSHGANVNAKDNELWTPLHAAATCGHINLVKILVQYGADLLAVNSDGNMPYDLCEDEPTLDVIETCMAYQGITQEKINEMRVAPEQQMIADIHCMIAAGQDLDWIDAQGATLLHIAGANGYLRAAELLLDHGVRVDVKDWDGWEPLHAAAFWGQMQMAELLVSHGASLSARTSMDEMPIDLCEEEEFKVLLLELKHKHDVIMKSQLRHKSSLSRRTSSAGSRGKVVRRASLSDRTNLYRKEYEGEAILWQRSAAEDQRTSTYNGDIRETRTDQENKDPNPRLEKPVLLSEFPTKIPRGELDMPVENGLRAPVSAYQYALANGDVWKVHEVPDYSMAYGNPGVADATPPWSSYKEQSPQTLLELKRQRAAAKLLSHPFLSTHLGSSMARTGESSSEGKAPLIGGRTSPYSSNGTSVYYTVTSGDPPLLKFKAPIEEMEEKVHGCCRIS.

A coiled-coil region spans residues 15–55; that stretch reads EKVPTLERLRAAQKRRAQQLKKWAQYEQDLQHRKRKHERKR. Position 69 is a phosphoserine (serine 69). ANK repeat units lie at residues 100 to 129, 133 to 162, 228 to 257, and 261 to 290; these read DGLTALHQCCIDNFEEIVKLLLSHGANVNA, ELWTPLHAAATCGHINLVKILVQYGADLLA, QGATLLHIAGANGYLRAAELLLDHGVRVDV, and DGWEPLHAAAFWGQMQMAELLVSHGASLSA. Phosphoserine occurs at positions 333, 337, and 350. A disordered region spans residues 378–403; it reads RTSTYNGDIRETRTDQENKDPNPRLE. The span at 385–403 shows a compositional bias: basic and acidic residues; that stretch reads DIRETRTDQENKDPNPRLE. A Phosphoserine modification is found at serine 476. The span at 504-515 shows a compositional bias: polar residues; that stretch reads SSMARTGESSSE. The segment at 504 to 525 is disordered; it reads SSMARTGESSSEGKAPLIGGRT. The stretch at 530–559 is one ANK 5 repeat; sequence SNGTSVYYTVTSGDPPLLKFKAPIEEMEEK. Cysteine 563 carries S-palmitoyl cysteine lipidation. At cysteine 564 the chain carries Cysteine methyl ester. Cysteine 564 carries the S-farnesyl cysteine lipid modification. The propeptide at 565–567 is removed in mature form; that stretch reads RIS.

Interacts with PPP1CA, PPP1CB and MSN. Interacts (via its fourth ankyrin repeat) with the mature dimeric form of RPSA/LAMR1. Interacts with EEF1A1. Interacts with PTEN. Interacts with ECE1. Phosphorylated by PKA and, after PKA priming, by GSK3B. Phosphorylation by GSK3B reduces its association with PP1C and enhances PP1C activity. Dephosphorylation by its associated PP1C results in enhanced association with PP1C, but reduced PP1C activity.

The protein localises to the cell membrane. It localises to the nucleus. The protein resides in the cell projection. Functionally, regulator of protein phosphatase 1 (PP1) that acts as a positive regulator of pulmonary endothelial cell (EC) barrier function. Involved in the regulation of the PI3K/AKT signaling pathway, angiogenesis and endothelial cell proliferation. Regulates angiogenesis and endothelial cell proliferation through the control of ECE1 dephosphorylation, trafficking and activity. Protects the endothelial barrier from lipopolysaccharide (LPS)-induced vascular leakage. Involved in the regulation of endothelial cell filopodia extension. May be a downstream target for TGF-beta1 signaling cascade in endothelial cells. Involved in PKA-mediated moesin dephosphorylation which is important in EC barrier protection against thrombin stimulation. Promotes the interaction of PPP1CA with RPSA/LAMR1 and in turn facilitates the dephosphorylation of RPSA/LAMR1. Involved in the dephosphorylation of EEF1A1. The protein is Protein phosphatase 1 regulatory inhibitor subunit 16B (PPP1R16B) of Homo sapiens (Human).